A 165-amino-acid polypeptide reads, in one-letter code: Lipoprotein signal peptidase (165 aa).

The next 4 helical transmembrane spans lie at 7 to 27 (FFLLLGLIITVLLDQAIKYWI), 28 to 48 (THTMLLGTEIPLFPFISLYHV), 61 to 81 (FSHWGLIALTITIIVFLFWLW), and 87 to 107 (DKALSRFGIVLIIGGAIGNLI). Active-site residues include Asp-117 and Asp-136. Residues 128–148 (SFAIFNLADTFITLGAISILI) traverse the membrane as a helical segment.

This sequence belongs to the peptidase A8 family.

It is found in the cell inner membrane. The catalysed reaction is Release of signal peptides from bacterial membrane prolipoproteins. Hydrolyzes -Xaa-Yaa-Zaa-|-(S,diacylglyceryl)Cys-, in which Xaa is hydrophobic (preferably Leu), and Yaa (Ala or Ser) and Zaa (Gly or Ala) have small, neutral side chains.. It functions in the pathway protein modification; lipoprotein biosynthesis (signal peptide cleavage). In terms of biological role, this protein specifically catalyzes the removal of signal peptides from prolipoproteins. The sequence is that of Lipoprotein signal peptidase from Bartonella bacilliformis (strain ATCC 35685 / KC583 / Herrer 020/F12,63).